We begin with the raw amino-acid sequence, 502 residues long: Maturase K (502 aa).

Belongs to the intron maturase 2 family. MatK subfamily.

It localises to the plastid. The protein localises to the chloroplast. Functionally, usually encoded in the trnK tRNA gene intron. Probably assists in splicing its own and other chloroplast group II introns. In Ipomoea purpurea (Common morning glory), this protein is Maturase K.